The primary structure comprises 87 residues: UPF0473 protein Daud_0916 (87 aa).

Belongs to the UPF0473 family.

This Desulforudis audaxviator (strain MP104C) protein is UPF0473 protein Daud_0916.